Consider the following 494-residue polypeptide: Cytochrome P450 2A4 (494 aa).

The residue at position 131 (Ser131) is a Phosphoserine. Lys379 bears the N6-acetyllysine mark. Cys439 is a binding site for heme.

The protein belongs to the cytochrome P450 family. Requires heme as cofactor. Kidney and lung. Expressed in liver, with a strong circadian rhythmicity. Circadian expression is regulated by DBP.

It is found in the endoplasmic reticulum membrane. The protein localises to the microsome membrane. It carries out the reaction an organic molecule + reduced [NADPH--hemoprotein reductase] + O2 = an alcohol + oxidized [NADPH--hemoprotein reductase] + H2O + H(+). Highly active in the 15-alpha-hydroxylation of testosterone. Also active in the 15-alpha-hydroxylation of progesterone and androstenedione. Little or no activity on corticosterone, pregnenolone, dehydroepiandrosterone, estradiol or estriol. This is Cytochrome P450 2A4 (Cyp2a4) from Mus musculus (Mouse).